A 79-amino-acid polypeptide reads, in one-letter code: Acyl carrier protein (79 aa).

One can recognise a Carrier domain in the interval 2-77 (SDIEQRVKKI…QAIDYAKAHV (76 aa)). Ser37 is subject to O-(pantetheine 4'-phosphoryl)serine.

The protein belongs to the acyl carrier protein (ACP) family. 4'-phosphopantetheine is transferred from CoA to a specific serine of apo-ACP by AcpS. This modification is essential for activity because fatty acids are bound in thioester linkage to the sulfhydryl of the prosthetic group.

It is found in the cytoplasm. It participates in lipid metabolism; fatty acid biosynthesis. Its function is as follows. Carrier of the growing fatty acid chain in fatty acid biosynthesis. This chain is Acyl carrier protein, found in Janthinobacterium sp. (strain Marseille) (Minibacterium massiliensis).